Reading from the N-terminus, the 482-residue chain is Ras GTPase-activating protein-binding protein 2 (482 aa).

An NTF2 domain is found at 11 to 133; that stretch reads VGREFVRQYY…FYVHNDMFRY (123 aa). Residues 140-158 show a composition bias toward acidic residues; the sequence is DSEPELDEESEDEVEEEQE. Disordered regions lie at residues 140–170 and 187–318; these read DSEP…VQEN and EPLE…EQND. Phosphoserine is present on residues Ser-141, Ser-149, and Ser-225. The segment at 142 to 220 is acidic disordered region; the sequence is EPELDEESED…PQVEEKHLEE (79 aa). Over residues 191-225 the composition is skewed to basic and acidic residues; sequence ESSHEPEPEPESETKTEELKPQVEEKHLEELEEKS. Thr-227 is modified (phosphothreonine). The segment covering 247–264 has biased composition (polar residues); that stretch reads ASVTSKNLPPSGTVSSSG. Residue Lys-281 forms a Glycyl lysine isopeptide (Lys-Gly) (interchain with G-Cter in SUMO2) linkage. Positions 290–300 are enriched in basic and acidic residues; it reads RVREQRPRERP. Residues 331-409 enclose the RRM domain; that stretch reads HQLFVGNLPH…VRLNVEEKKT (79 aa). Residue Lys-392 is modified to N6-succinyllysine. Residues 404-476 form an RG-rich region region; the sequence is VEEKKTRAAR…GRGTGQMEGR (73 aa). A compositionally biased stretch (basic and acidic residues) spans 408-432; it reads KTRAARERETRGGGDDRRDIRRNDR. The segment at 408 to 482 is disordered; that stretch reads KTRAARERET…MEGRFTGQRR (75 aa). Positions 433–445 are enriched in gly residues; the sequence is GPGGPRGIVGGGM. Arg-457 is subject to Omega-N-methylarginine. Ser-466 bears the Phosphoserine mark. The residue at position 468 (Arg-468) is an Omega-N-methylarginine.

As to quaternary structure, forms homooligomers. Forms heterodimers with G3BP1. Interacts with NFKBIA (via N-terminus). Interacts (via NTF2 domain) with USP10; inhibiting stress granule formation. Interacts (via NTF2 domain) with CAPRIN1; promoting stress granule formation. Associates (via RG-rich region) with 40S ribosome subunits. Interacts with PABPC1.

The protein localises to the cytoplasm. Its subcellular location is the stress granule. With respect to regulation, under physiological conditions, G3BP2 adopts a compact state that is stabilized by intramolecular interactions between the RG-rich and the acidic regions that inhibit phase separation. Upon stress, polysomes disassemble and mRNAs are released in an unfolded protein-free state. Binding of unfolded mRNA to G3BP2 outcompetes the intramolecular interactions and RNA-bound G3BP2 adopts an expanded conformation in which the RG-rich region becomes exposed to engage in protein-protein and protein-RNA interactions, allowing physical cross-linking of RNA molecules to form protein-RNA condensates, leading to liquid-liquid phase separation (LLPS). Functionally, scaffold protein that plays an essential role in cytoplasmic stress granule formation which acts as a platform for antiviral signaling. Plays an essential role in stress granule formation. Stress granules are membraneless compartments that store mRNAs and proteins, such as stalled translation pre-initiation complexes, in response to stress. Promotes formation of stress granules phase-separated membraneless compartment by undergoing liquid-liquid phase separation (LLPS) upon unfolded RNA-binding: functions as a molecular switch that triggers RNA-dependent LLPS in response to a rise in intracellular free RNA concentrations. The sequence is that of Ras GTPase-activating protein-binding protein 2 (G3bp2) from Mus musculus (Mouse).